Here is a 128-residue protein sequence, read N- to C-terminus: uncharacterized protein (128 aa).

The disordered stretch occupies residues 25-61; it reads LPNRLPEGSTVGPKPDSSWEAGSQGNWGLTSSGAGQD. The segment covering 44–61 has biased composition (polar residues); it reads EAGSQGNWGLTSSGAGQD.

This is an uncharacterized protein from Homo sapiens (Human).